An 86-amino-acid polypeptide reads, in one-letter code: Small ribosomal subunit protein uS15c (86 aa).

This sequence belongs to the universal ribosomal protein uS15 family. Part of the 30S ribosomal subunit.

It is found in the plastid. It localises to the chloroplast. The polypeptide is Small ribosomal subunit protein uS15c (rps15) (Cryptomeria japonica (Japanese cedar)).